The sequence spans 74 residues: MRADIHPKYQTLVATCSCGNVIETRSALGKETLYLDVCSACHPFYTGKQKNVDTGGRIDKFKQRFSGMSRSIKR.

Zn(2+)-binding residues include C16, C18, C38, and C41.

The protein belongs to the bacterial ribosomal protein bL31 family. Type A subfamily. Part of the 50S ribosomal subunit. Zn(2+) is required as a cofactor.

Functionally, binds the 23S rRNA. The polypeptide is Large ribosomal subunit protein bL31 (Acinetobacter baylyi (strain ATCC 33305 / BD413 / ADP1)).